A 516-amino-acid polypeptide reads, in one-letter code: Bifunctional purine biosynthesis protein PurH (516 aa).

Residues 1–146 enclose the MGS-like domain; the sequence is MTRLALLSVS…KNYAHVTVLS (146 aa).

This sequence belongs to the PurH family.

It carries out the reaction (6R)-10-formyltetrahydrofolate + 5-amino-1-(5-phospho-beta-D-ribosyl)imidazole-4-carboxamide = 5-formamido-1-(5-phospho-D-ribosyl)imidazole-4-carboxamide + (6S)-5,6,7,8-tetrahydrofolate. It catalyses the reaction IMP + H2O = 5-formamido-1-(5-phospho-D-ribosyl)imidazole-4-carboxamide. It functions in the pathway purine metabolism; IMP biosynthesis via de novo pathway; 5-formamido-1-(5-phospho-D-ribosyl)imidazole-4-carboxamide from 5-amino-1-(5-phospho-D-ribosyl)imidazole-4-carboxamide (10-formyl THF route): step 1/1. The protein operates within purine metabolism; IMP biosynthesis via de novo pathway; IMP from 5-formamido-1-(5-phospho-D-ribosyl)imidazole-4-carboxamide: step 1/1. The polypeptide is Bifunctional purine biosynthesis protein PurH (Rippkaea orientalis (strain PCC 8801 / RF-1) (Cyanothece sp. (strain PCC 8801))).